The primary structure comprises 177 residues: Large ribosomal subunit protein uL6 (177 aa).

This sequence belongs to the universal ribosomal protein uL6 family. Part of the 50S ribosomal subunit.

This protein binds to the 23S rRNA, and is important in its secondary structure. It is located near the subunit interface in the base of the L7/L12 stalk, and near the tRNA binding site of the peptidyltransferase center. This chain is Large ribosomal subunit protein uL6, found in Rickettsia africae (strain ESF-5).